The sequence spans 120 residues: MHASSQIRLTFNQDHPAEHEDDSSGIAVQESKPALQAPPMYKVVLFNDDYTPMDFVVEVLETFFGMNRELATKIMLTVHTEGRAVCGVYTRDIAETKAMQVNQYARESQHPLLCEIEKDG.

Residues 9–32 are disordered; it reads LTFNQDHPAEHEDDSSGIAVQESK.

The protein belongs to the ClpS family. Binds to the N-terminal domain of the chaperone ClpA.

Involved in the modulation of the specificity of the ClpAP-mediated ATP-dependent protein degradation. The polypeptide is ATP-dependent Clp protease adapter protein ClpS (Ectopseudomonas mendocina (strain ymp) (Pseudomonas mendocina)).